The chain runs to 270 residues: 3-phenylpropionate-dihydrodiol/cinnamic acid-dihydrodiol dehydrogenase (270 aa).

10-34 (FITGGGSGLGLALVERFIEEGAQVA) provides a ligand contact to NAD(+). A substrate-binding site is contributed by serine 143. Tyrosine 156 serves as the catalytic Proton acceptor.

This sequence belongs to the short-chain dehydrogenases/reductases (SDR) family.

It carries out the reaction 3-(cis-5,6-dihydroxycyclohexa-1,3-dien-1-yl)propanoate + NAD(+) = 3-(2,3-dihydroxyphenyl)propanoate + NADH + H(+). The enzyme catalyses (2E)-3-(cis-5,6-dihydroxycyclohexa-1,3-dien-1-yl)prop-2-enoate + NAD(+) = (2E)-3-(2,3-dihydroxyphenyl)prop-2-enoate + NADH + H(+). It participates in aromatic compound metabolism; 3-phenylpropanoate degradation. Converts 3-phenylpropionate-dihydrodiol (PP-dihydrodiol) and cinnamic acid-dihydrodiol (CI-dihydrodiol) into 3-(2,3-dihydroxylphenyl)propanoic acid (DHPP) and 2,3-dihydroxicinnamic acid (DHCI), respectively. This Shigella flexneri serotype 5b (strain 8401) protein is 3-phenylpropionate-dihydrodiol/cinnamic acid-dihydrodiol dehydrogenase.